The chain runs to 501 residues: Endonuclease domain-containing 1 protein (501 aa).

Positions Met-1–Ala-21 are cleaved as a signal peptide. Lys-408 bears the N6-acetyllysine mark.

It belongs to the DNA/RNA non-specific endonuclease family. As to quaternary structure, interacts with RNF26; this interaction is important to modulate innate immune signaling through the cGAS-STING pathway.

It localises to the secreted. May act as a DNase and a RNase. Plays a role in the modulation of innate immune signaling through the cGAS-STING pathway by interacting with RNF26. The polypeptide is Endonuclease domain-containing 1 protein (Endod1) (Mus musculus (Mouse)).